We begin with the raw amino-acid sequence, 793 residues long: uncharacterized protein (793 aa).

Residues 1–21 (MLKKTLLAYTIGFAFSPPANA) form the signal peptide. A disulfide bridge connects residues C769 and C792.

Belongs to the fimbrial export usher family.

It localises to the cell outer membrane. Involved in the export and assembly of a fimbrial subunit across the outer membrane. This is an uncharacterized protein from Escherichia coli (strain K12).